Reading from the N-terminus, the 218-residue chain is 23 kDa integral membrane protein (218 aa).

Residues 1–12 are Cytoplasmic-facing; the sequence is MATLGTGMRCLK. The helical transmembrane segment at 13–36 threads the bilayer; the sequence is SCVFVLNIICLLCSLVLIGAGAYV. Topologically, residues 37-55 are extracellular; the sequence is EVKFSQYGDNLHKVWQAAP. The chain crosses the membrane as a helical span at residues 56–71; sequence IAIIVVGVIILIVSFL. Residues 72-82 lie on the Cytoplasmic side of the membrane; sequence GCCGAIKENVC. Residues 83 to 108 form a helical membrane-spanning segment; the sequence is MLYMYAFFLVVLLIAELAAAIVAVVY. Residues 109–183 lie on the Extracellular side of the membrane; sequence KDRIDSEIDA…SVFGAFLKRN (75 aa). N165 carries N-linked (GlcNAc...) asparagine glycosylation. Residues 184-205 form a helical membrane-spanning segment; the sequence is LVIVACVAFGVCFFQLLSIVIA. Residues 206–218 are Cytoplasmic-facing; sequence CCLGRQIKEYENV.

It belongs to the tetraspanin (TM4SF) family.

The protein localises to the membrane. This is 23 kDa integral membrane protein from Schistosoma mansoni (Blood fluke).